The chain runs to 857 residues: DNA gyrase subunit A (857 aa).

A Topo IIA-type catalytic domain is found at 39-507 (LPDVRDGLKP…YEGDMSIEDL (469 aa)). Residue tyrosine 127 is the O-(5'-phospho-DNA)-tyrosine intermediate of the active site. The GyrA-box signature appears at 534–540 (QKRGGKG). The interval 825 to 857 (REAEEVDGDVAVDETAEGAATTGTDEGEAPSAE) is disordered. Over residues 828–840 (EEVDGDVAVDETA) the composition is skewed to acidic residues.

Belongs to the type II topoisomerase GyrA/ParC subunit family. As to quaternary structure, heterotetramer, composed of two GyrA and two GyrB chains. In the heterotetramer, GyrA contains the active site tyrosine that forms a transient covalent intermediate with DNA, while GyrB binds cofactors and catalyzes ATP hydrolysis.

It is found in the cytoplasm. The catalysed reaction is ATP-dependent breakage, passage and rejoining of double-stranded DNA.. A type II topoisomerase that negatively supercoils closed circular double-stranded (ds) DNA in an ATP-dependent manner to modulate DNA topology and maintain chromosomes in an underwound state. Negative supercoiling favors strand separation, and DNA replication, transcription, recombination and repair, all of which involve strand separation. Also able to catalyze the interconversion of other topological isomers of dsDNA rings, including catenanes and knotted rings. Type II topoisomerases break and join 2 DNA strands simultaneously in an ATP-dependent manner. The polypeptide is DNA gyrase subunit A (Streptomyces coelicolor (strain ATCC BAA-471 / A3(2) / M145)).